Reading from the N-terminus, the 70-residue chain is MGAIAAGIAMFGAALGAGIGNGLVISKMLEGMARQPELSGQLRTNMFIGVGLIESMPIISFVVALMVMNK.

The next 2 membrane-spanning stretches (helical) occupy residues 4 to 24 and 47 to 67; these read IAAG…NGLV and FIGV…ALMV.

Belongs to the ATPase C chain family. In terms of assembly, F-type ATPases have 2 components, F(1) - the catalytic core - and F(0) - the membrane proton channel. F(1) has five subunits: alpha(3), beta(3), gamma(1), delta(1), epsilon(1). F(0) has three main subunits: a(1), b(2) and c(10-14). The alpha and beta chains form an alternating ring which encloses part of the gamma chain. F(1) is attached to F(0) by a central stalk formed by the gamma and epsilon chains, while a peripheral stalk is formed by the delta and b chains.

Its subcellular location is the cell membrane. F(1)F(0) ATP synthase produces ATP from ADP in the presence of a proton or sodium gradient. F-type ATPases consist of two structural domains, F(1) containing the extramembraneous catalytic core and F(0) containing the membrane proton channel, linked together by a central stalk and a peripheral stalk. During catalysis, ATP synthesis in the catalytic domain of F(1) is coupled via a rotary mechanism of the central stalk subunits to proton translocation. In terms of biological role, key component of the F(0) channel; it plays a direct role in translocation across the membrane. A homomeric c-ring of between 10-14 subunits forms the central stalk rotor element with the F(1) delta and epsilon subunits. The polypeptide is ATP synthase subunit c (Lactiplantibacillus plantarum (strain ATCC BAA-793 / NCIMB 8826 / WCFS1) (Lactobacillus plantarum)).